Consider the following 401-residue polypeptide: Putative TRAP transporter large permease protein HI_0050 (401 aa).

The next 11 membrane-spanning stretches (helical) occupy residues 31–51 (FPLM…HGGI), 70–90 (LGYV…SAVA), 115–135 (GLIC…PMII), 144–164 (ITKL…GLWV), 193–213 (AFWP…GIFT), 217–237 (AGVV…GLTF), 253–273 (MVMF…VAQI), 290–310 (ILMF…DLIP), 330–350 (IAYF…TPPV), 353–373 (VLYV…KGIA), and 375–395 (FLFV…IVIV).

The protein belongs to the TRAP transporter large permease family.

It is found in the cell inner membrane. The protein is Putative TRAP transporter large permease protein HI_0050 of Haemophilus influenzae (strain ATCC 51907 / DSM 11121 / KW20 / Rd).